An 808-amino-acid chain; its full sequence is Leucine--tRNA ligase (808 aa).

Positions 40 to 51 (PYPSGQGLHVGH) match the 'HIGH' region motif. The 'KMSKS' region motif lies at 580–584 (KMSKS). Lysine 583 contributes to the ATP binding site.

Belongs to the class-I aminoacyl-tRNA synthetase family.

It is found in the cytoplasm. It carries out the reaction tRNA(Leu) + L-leucine + ATP = L-leucyl-tRNA(Leu) + AMP + diphosphate. The protein is Leucine--tRNA ligase of Leuconostoc mesenteroides subsp. mesenteroides (strain ATCC 8293 / DSM 20343 / BCRC 11652 / CCM 1803 / JCM 6124 / NCDO 523 / NBRC 100496 / NCIMB 8023 / NCTC 12954 / NRRL B-1118 / 37Y).